Reading from the N-terminus, the 270-residue chain is CASP-like protein 4A1 (270 aa).

The tract at residues 1–110 is disordered; that stretch reads MEELEKTQKF…PSFSSSSSTP (110 aa). Residues 1 to 121 lie on the Cytoplasmic side of the membrane; the sequence is MEELEKTQKF…ESKWASLIRK (121 aa). Positions 24-66 are enriched in polar residues; it reads SSPINFEMSSRSSLHSLPQTTIESPPDSPTLSSIPDSHGSSPH. Over residues 85 to 97 the composition is skewed to basic and acidic residues; sequence NGEEEKKVSESRR. Positions 100–110 are enriched in low complexity; it reads RPSFSSSSSTP. A helical transmembrane segment spans residues 122–142; sequence ALLGFRVIAFVSCLVSFSVMV. Residues 143–161 are Extracellular-facing; the sequence is SDRDKGWAHDSFYNYKEFR. Residues 162 to 182 form a helical membrane-spanning segment; that stretch reads FCLAANVIGFVYSGFMICDLV. The Cytoplasmic segment spans residues 183 to 198; it reads YLLSTSIRRSRHNLRH. Residues 199–221 traverse the membrane as a helical segment; sequence FLEFGLDQMLAYLLASASTSASI. Residues 222–246 are Extracellular-facing; the sequence is RVDDWQSNWGADKFPDLARASVALS. The chain crosses the membrane as a helical span at residues 247–267; it reads YVSFVAFAFCSLASGYALCAL. Over 268-270 the chain is Cytoplasmic; it reads RSI.

This sequence belongs to the Casparian strip membrane proteins (CASP) family. Homodimer and heterodimers.

The protein resides in the cell membrane. The polypeptide is CASP-like protein 4A1 (Arabidopsis thaliana (Mouse-ear cress)).